Consider the following 253-residue polypeptide: Probable transcriptional regulatory protein Mlut_12910 (253 aa).

This sequence belongs to the TACO1 family.

Its subcellular location is the cytoplasm. This is Probable transcriptional regulatory protein Mlut_12910 from Micrococcus luteus (strain ATCC 4698 / DSM 20030 / JCM 1464 / CCM 169 / CCUG 5858 / IAM 1056 / NBRC 3333 / NCIMB 9278 / NCTC 2665 / VKM Ac-2230) (Micrococcus lysodeikticus).